We begin with the raw amino-acid sequence, 261 residues long: Undecaprenyl-diphosphatase (261 aa).

8 helical membrane passes run 9-31 (ALLL…GHLT), 46-66 (FLKT…LLLY), 80-100 (IAVA…LIKG), 102-122 (ILGN…VLLF), 137-157 (ALPL…ALFP), 180-200 (AEFS…YDLW), 209-229 (GGWS…LVTV), and 240-260 (GFRP…FFFL).

Belongs to the UppP family.

The protein localises to the cell inner membrane. It carries out the reaction di-trans,octa-cis-undecaprenyl diphosphate + H2O = di-trans,octa-cis-undecaprenyl phosphate + phosphate + H(+). Its function is as follows. Catalyzes the dephosphorylation of undecaprenyl diphosphate (UPP). Confers resistance to bacitracin. In Thermus thermophilus (strain ATCC 27634 / DSM 579 / HB8), this protein is Undecaprenyl-diphosphatase.